The following is a 542-amino-acid chain: CTP synthase (542 aa).

Residues 1 to 265 (MTRYIFVTGG…DDIVVERFGL (265 aa)) form an amidoligase domain region. Ser-13 serves as a coordination point for CTP. Ser-13 is a UTP binding site. Residues 14–19 (SLGKGI) and Asp-71 each bind ATP. Mg(2+) contacts are provided by Asp-71 and Glu-139. CTP-binding positions include 146-148 (DIE), 186-191 (KTKPTQ), and Lys-222. UTP is bound by residues 186 to 191 (KTKPTQ) and Lys-222. Positions 290–541 (TIAMVGKYME…VNAALKYSGK (252 aa)) constitute a Glutamine amidotransferase type-1 domain. Residue Gly-351 coordinates L-glutamine. Residue Cys-378 is the Nucleophile; for glutamine hydrolysis of the active site. Residues 379-382 (LGMQ), Glu-402, and Arg-469 contribute to the L-glutamine site. Active-site residues include His-514 and Glu-516.

Belongs to the CTP synthase family. In terms of assembly, homotetramer.

It catalyses the reaction UTP + L-glutamine + ATP + H2O = CTP + L-glutamate + ADP + phosphate + 2 H(+). It carries out the reaction L-glutamine + H2O = L-glutamate + NH4(+). The enzyme catalyses UTP + NH4(+) + ATP = CTP + ADP + phosphate + 2 H(+). It functions in the pathway pyrimidine metabolism; CTP biosynthesis via de novo pathway; CTP from UDP: step 2/2. Allosterically activated by GTP, when glutamine is the substrate; GTP has no effect on the reaction when ammonia is the substrate. The allosteric effector GTP functions by stabilizing the protein conformation that binds the tetrahedral intermediate(s) formed during glutamine hydrolysis. Inhibited by the product CTP, via allosteric rather than competitive inhibition. Functionally, catalyzes the ATP-dependent amination of UTP to CTP with either L-glutamine or ammonia as the source of nitrogen. Regulates intracellular CTP levels through interactions with the four ribonucleotide triphosphates. The chain is CTP synthase from Pseudomonas aeruginosa (strain LESB58).